We begin with the raw amino-acid sequence, 262 residues long: Glutamate racemase (262 aa).

Residues 9–10 (DS) and 41–42 (YG) each bind substrate. Catalysis depends on Cys73, which acts as the Proton donor/acceptor. Substrate is bound at residue 74 to 75 (NT). Residue Cys180 is the Proton donor/acceptor of the active site. Residue 181 to 182 (TH) coordinates substrate.

The protein belongs to the aspartate/glutamate racemases family.

The enzyme catalyses L-glutamate = D-glutamate. Its pathway is cell wall biogenesis; peptidoglycan biosynthesis. Functionally, provides the (R)-glutamate required for cell wall biosynthesis. This is Glutamate racemase from Aliivibrio fischeri (strain ATCC 700601 / ES114) (Vibrio fischeri).